A 104-amino-acid polypeptide reads, in one-letter code: Glutaredoxin-C15 (104 aa).

The 103-residue stretch at 1 to 103 (MERVAKLSTE…PMLKAAGAIW (103 aa)) folds into the Glutaredoxin domain. Cys21 and Cys24 form a disulfide bridge.

It belongs to the glutaredoxin family. CC-type subfamily.

It localises to the cytoplasm. In terms of biological role, has a glutathione-disulfide oxidoreductase activity in the presence of NADPH and glutathione reductase. Reduces low molecular weight disulfides and proteins. The chain is Glutaredoxin-C15 (GRXC15) from Oryza sativa subsp. japonica (Rice).